The chain runs to 306 residues: Glutaminase (306 aa).

Residues serine 64, asparagine 115, glutamate 159, asparagine 166, tyrosine 190, tyrosine 242, and valine 260 each coordinate substrate.

Belongs to the glutaminase family. As to quaternary structure, homotetramer.

It carries out the reaction L-glutamine + H2O = L-glutamate + NH4(+). This chain is Glutaminase, found in Vibrio vulnificus (strain YJ016).